The sequence spans 329 residues: DNA-directed RNA polymerase subunit alpha (329 aa).

The segment at 1–235 is alpha N-terminal domain (alpha-NTD); sequence MQGSVTEFLK…EQLDAFVDLR (235 aa). The tract at residues 249–329 is alpha C-terminal domain (alpha-CTD); it reads FDPILLRPVD…NWPPASIAED (81 aa).

This sequence belongs to the RNA polymerase alpha chain family. As to quaternary structure, homodimer. The RNAP catalytic core consists of 2 alpha, 1 beta, 1 beta' and 1 omega subunit. When a sigma factor is associated with the core the holoenzyme is formed, which can initiate transcription.

The enzyme catalyses RNA(n) + a ribonucleoside 5'-triphosphate = RNA(n+1) + diphosphate. Its function is as follows. DNA-dependent RNA polymerase catalyzes the transcription of DNA into RNA using the four ribonucleoside triphosphates as substrates. This is DNA-directed RNA polymerase subunit alpha from Histophilus somni (strain 129Pt) (Haemophilus somnus).